The sequence spans 400 residues: CinA-like protein (400 aa).

It belongs to the CinA family.

This Escherichia coli (strain 55989 / EAEC) protein is CinA-like protein.